The chain runs to 854 residues: Selenocysteine insertion sequence-binding protein 2 (854 aa).

Disordered regions lie at residues 332–351 (ADPKNVSIPSSEALSSDPSY), 356–394 (HIIHPTQKSKASQGSDLEQNEASRKNKKKKEKSTSKYEV), 417–445 (ERRDRIETPKFQSKQQPQDNFKNNVKKSQ), and 488–619 (ECAS…PNHT). Composition is skewed to polar residues over residues 338–350 (SIPSSEALSSDPS) and 361–372 (TQKSKASQGSDL). Residues 380–387 (KNKKKKEK) carry the Nuclear localization signal motif. The span at 426–445 (KFQSKQQPQDNFKNNVKKSQ) shows a compositional bias: polar residues. A compositionally biased stretch (basic and acidic residues) spans 536–547 (ILKERQERKQRL). The span at 548–559 (QENAVSPAFTSD) shows a compositional bias: polar residues. Residues 560-572 (DTQDGESGGDDQF) are compositionally biased toward acidic residues. The segment covering 593 to 611 (VEDKSEEPPGTELQRDTEA) has biased composition (basic and acidic residues). The interval 673-694 (LVLGLREVLKHLKLKKLKCVII) is RNA-binding. Residues 787–812 (EPRPQAPPSLPTQGPSCPAEDGPPAL) form a disordered region.

Expressed at high levels in testis.

It is found in the nucleus. It localises to the mitochondrion. In terms of biological role, mRNA-binding protein that binds to the SECIS (selenocysteine insertion sequence) element present in the 3'-UTR of mRNAs encoding selenoproteins and facilitates the incorporation of the rare amino acid selenocysteine. Insertion of selenocysteine at UGA codons is mediated by SECISBP2 and EEFSEC: SECISBP2 (1) specifically binds the SECIS sequence once the 80S ribosome encounters an in-frame UGA codon and (2) contacts the RPS27A/eS31 of the 40S ribosome before ribosome stalling. (3) GTP-bound EEFSEC then delivers selenocysteinyl-tRNA(Sec) to the 80S ribosome and adopts a preaccommodated state conformation. (4) After GTP hydrolysis, EEFSEC dissociates from the assembly, selenocysteinyl-tRNA(Sec) accommodates, and peptide bond synthesis and selenoprotein elongation occur. The polypeptide is Selenocysteine insertion sequence-binding protein 2 (Homo sapiens (Human)).